A 766-amino-acid chain; its full sequence is Semaphorin-4E (766 aa).

Positions M1 to G24 are cleaved as a signal peptide. At S25–T664 the chain is on the extracellular side. In terms of domain architecture, Sema spans L27 to I499. The N-linked (GlcNAc...) asparagine glycan is linked to N52. Cystine bridges form between C100/C111, C129/C138, C261/C373, and C285/C329. N433 is a glycosylation site (N-linked (GlcNAc...) asparagine). The 52-residue stretch at E501–S552 folds into the PSI domain. 2 disulfides stabilise this stretch: C502–C519 and C511–C528. The 86-residue stretch at P555 to A640 folds into the Ig-like C2-type domain. N564 and N612 each carry an N-linked (GlcNAc...) asparagine glycan. C577 and C623 are joined by a disulfide. Residues L665–Y685 traverse the membrane as a helical segment. The Cytoplasmic segment spans residues K686–I766. Residues F724 to G750 form a disordered region.

It belongs to the semaphorin family.

It is found in the membrane. This chain is Semaphorin-4E (sema4e), found in Danio rerio (Zebrafish).